A 248-amino-acid polypeptide reads, in one-letter code: Ubiquinone biosynthesis O-methyltransferase (248 aa).

S-adenosyl-L-methionine contacts are provided by Arg41, Gly72, Asp93, and Met136.

This sequence belongs to the methyltransferase superfamily. UbiG/COQ3 family.

It carries out the reaction a 3-demethylubiquinol + S-adenosyl-L-methionine = a ubiquinol + S-adenosyl-L-homocysteine + H(+). The enzyme catalyses a 3-(all-trans-polyprenyl)benzene-1,2-diol + S-adenosyl-L-methionine = a 2-methoxy-6-(all-trans-polyprenyl)phenol + S-adenosyl-L-homocysteine + H(+). The protein operates within cofactor biosynthesis; ubiquinone biosynthesis. Functionally, O-methyltransferase that catalyzes the 2 O-methylation steps in the ubiquinone biosynthetic pathway. This is Ubiquinone biosynthesis O-methyltransferase from Rhizobium etli (strain ATCC 51251 / DSM 11541 / JCM 21823 / NBRC 15573 / CFN 42).